A 118-amino-acid chain; its full sequence is Protein RALF-like 24 (118 aa).

A signal peptide spans 1 to 22 (MSRSLALVYLSLLCLQTHLSIS). Positions 23–63 (VTVPIPSVNGEIDAMLNRNGVIGEEEGEEMMPSEISRRVMM) are cleaved as a propeptide — removed in mature form. 2 disulfides stabilise this stretch: Cys-81–Cys-91 and Cys-103–Cys-109.

It belongs to the plant rapid alkalinization factor (RALF) family. Proteolytically cleaved, probably by S1P, a subtilisin-like serine protease (subtilase).

It localises to the secreted. In terms of biological role, cell signaling peptide that may regulate plant stress, growth, and development. Mediates a rapid alkalinization of extracellular space by mediating a transient increase in the cytoplasmic Ca(2+) concentration leading to a calcium-dependent signaling events through a cell surface receptor and a concomitant activation of some intracellular mitogen-activated protein kinases. In Arabidopsis thaliana (Mouse-ear cress), this protein is Protein RALF-like 24 (RALFL24).